The primary structure comprises 260 residues: MAIIDSFVGSSKISARDLNVHYGEKQALFDVNLDIPVGQVTALIGPSGCGKSTFLRCINRMNDLVEIARVSGSLFLDGIDIQDAAMDVVQLRARVGMVFQRPNPFPKSIYENVAFGPRLHGLAAGADELDEIVISSLDKAGLWGEVKDRMGETGTSLSGGQQQRLCIARAIAVAPEVILMDEPCSALDPIATAAVEELIDELRGSYTIVIVTHSMQQAARVSQRTGFFHLGKLIEMGETESMFTSPQHPLTQGYITGRFG.

The ABC transporter domain occupies 13–255 (ISARDLNVHY…PQHPLTQGYI (243 aa)). 45-52 (GPSGCGKS) is a binding site for ATP.

The protein belongs to the ABC transporter superfamily. Phosphate importer (TC 3.A.1.7) family. In terms of assembly, the complex is composed of two ATP-binding proteins (PstB), two transmembrane proteins (PstC and PstA) and a solute-binding protein (PstS).

The protein resides in the cell inner membrane. The catalysed reaction is phosphate(out) + ATP + H2O = ADP + 2 phosphate(in) + H(+). Functionally, part of the ABC transporter complex PstSACB involved in phosphate import. Responsible for energy coupling to the transport system. The sequence is that of Phosphate import ATP-binding protein PstB 1 from Paramagnetospirillum magneticum (strain ATCC 700264 / AMB-1) (Magnetospirillum magneticum).